We begin with the raw amino-acid sequence, 641 residues long: Fructose-1,6-bisphosphatase class 3 (641 aa).

Belongs to the FBPase class 3 family. Mn(2+) is required as a cofactor.

The catalysed reaction is beta-D-fructose 1,6-bisphosphate + H2O = beta-D-fructose 6-phosphate + phosphate. It participates in carbohydrate biosynthesis; gluconeogenesis. This is Fructose-1,6-bisphosphatase class 3 from Ligilactobacillus salivarius (strain UCC118) (Lactobacillus salivarius).